Consider the following 334-residue polypeptide: Aspartate carbamoyltransferase catalytic subunit (334 aa).

Residues arginine 71 and threonine 72 each contribute to the carbamoyl phosphate site. Lysine 99 contacts L-aspartate. Carbamoyl phosphate-binding residues include arginine 121, histidine 151, and glutamine 154. L-aspartate-binding residues include arginine 184 and arginine 239. Residues glycine 280 and proline 281 each coordinate carbamoyl phosphate.

Belongs to the aspartate/ornithine carbamoyltransferase superfamily. ATCase family. As to quaternary structure, heterododecamer (2C3:3R2) of six catalytic PyrB chains organized as two trimers (C3), and six regulatory PyrI chains organized as three dimers (R2).

It carries out the reaction carbamoyl phosphate + L-aspartate = N-carbamoyl-L-aspartate + phosphate + H(+). It participates in pyrimidine metabolism; UMP biosynthesis via de novo pathway; (S)-dihydroorotate from bicarbonate: step 2/3. In terms of biological role, catalyzes the condensation of carbamoyl phosphate and aspartate to form carbamoyl aspartate and inorganic phosphate, the committed step in the de novo pyrimidine nucleotide biosynthesis pathway. This is Aspartate carbamoyltransferase catalytic subunit from Pseudomonas putida (Arthrobacter siderocapsulatus).